Reading from the N-terminus, the 318-residue chain is Ferredoxin--NADP reductase (318 aa).

FAD-binding residues include Asp33, Gln41, Tyr46, Val84, Phe115, Asp276, and Thr316.

The protein belongs to the ferredoxin--NADP reductase type 2 family. Homodimer. Requires FAD as cofactor.

It carries out the reaction 2 reduced [2Fe-2S]-[ferredoxin] + NADP(+) + H(+) = 2 oxidized [2Fe-2S]-[ferredoxin] + NADPH. This Lactobacillus johnsonii (strain CNCM I-12250 / La1 / NCC 533) protein is Ferredoxin--NADP reductase.